Reading from the N-terminus, the 1222-residue chain is Serine/threonine-protein kinase WNK4 (1222 aa).

Residues 1 to 17 (MLAPRNTETGVHMSQTE) show a composition bias toward polar residues. Residues 1 to 163 (MLAPRNTETG…KEDTETQAVA (163 aa)) form a disordered region. Position 95 is a phosphoserine (Ser-95). Positions 135-152 (EPPRVPDAAARERRREQE) are enriched in basic and acidic residues. Residues Lys-154 and Lys-172 each participate in a glycyl lysine isopeptide (Lys-Gly) (interchain with G-Cter in ubiquitin) cross-link. One can recognise a Protein kinase domain in the interval 171–429 (LKFDIEIGRG…IQDLLTHAFF (259 aa)). Residue Ser-181 participates in ATP binding. Residues Lys-183, Lys-223, and Lys-238 each participate in a glycyl lysine isopeptide (Lys-Gly) (interchain with G-Cter in ubiquitin) cross-link. Residues 251–254 (TELM) and Lys-301 contribute to the ATP site. The active-site Proton acceptor is the Asp-318. A Glycyl lysine isopeptide (Lys-Gly) (interchain with G-Cter in ubiquitin) cross-link involves residue Lys-325. Phosphoserine; by autocatalysis is present on residues Ser-328 and Ser-332. Residues Lys-384, Lys-390, Lys-447, and Lys-451 each participate in a glycyl lysine isopeptide (Lys-Gly) (interchain with G-Cter in ubiquitin) cross-link. A disordered region spans residues 527–562 (LEVLPPDSGPPPATVSMTPGPPSAFPPEPEEPEADQ). Positions 533-553 (DSGPPPATVSMTPGPPSAFPP) are enriched in pro residues. The tract at residues 554–564 (EPEEPEADQHQ) is interaction with KLHL3. Phosphoserine is present on Ser-572. Disordered stretches follow at residues 591–612 (FLDA…PAEP), 626–679 (RSGP…SVSD), 747–809 (DAGP…GTPF), 836–873 (QVSS…SPLP), and 927–1087 (SPGL…QPSP). The span at 627 to 638 (SGPGSDFSPGDS) shows a compositional bias: low complexity. A compositionally biased stretch (basic residues) spans 659–672 (NPVKTLRRRPRSRL). Low complexity-rich tracts occupy residues 792 to 809 (FSTS…GTPF) and 845 to 873 (APSS…SPLP). Pro residues predominate over residues 935 to 946 (PPAPPGPLPSMP). Polar residues predominate over residues 953–963 (DQESLSAQTAE). A Glycyl lysine isopeptide (Lys-Gly) (interchain with G-Cter in ubiquitin) cross-link involves residue Lys-990. The RFXV motif signature appears at 996-999 (RFQV). Ser-1014 is subject to Phosphoserine. Over residues 1044–1056 (ETREALAESDRAA) the composition is skewed to basic and acidic residues. The segment covering 1076–1086 (GGSSPILSQPS) has biased composition (polar residues). Residues Lys-1123, Lys-1136, and Lys-1137 each participate in a glycyl lysine isopeptide (Lys-Gly) (interchain with G-Cter in ubiquitin) cross-link. Residues 1169–1222 (SKGSFPTSRRNSLQRSDLPGPGIMRRNSLSGSSTGSQEQRASKGVTFAGDVGRM) are disordered. Composition is skewed to polar residues over residues 1172 to 1183 (SFPTSRRNSLQR) and 1195 to 1207 (NSLS…SQEQ). Phosphoserine is present on Ser-1196.

It belongs to the protein kinase superfamily. Ser/Thr protein kinase family. WNK subfamily. As to quaternary structure, interacts with the C-terminal region of KCNJ1. Interacts with WNK1 and WNK3. Interacts with KLHL3. The cofactor is Mg(2+). Post-translationally, autophosphorylated at Ser-328 and Ser-332, promoting its activation. Phosphorylated by WNK1 and WNK3. Phosphorylated at Ser-572 in a MAP3K15/ASK3-dependent process in response to osmotic stress or hypotonic low-chloride stimulation. Ubiquitinated by the BCR(KLHL3) complex, leading to its degradation. Also ubiquitinated by the BCR(KLHL2) complex.

The protein localises to the cell junction. It is found in the tight junction. The catalysed reaction is L-seryl-[protein] + ATP = O-phospho-L-seryl-[protein] + ADP + H(+). It catalyses the reaction L-threonyl-[protein] + ATP = O-phospho-L-threonyl-[protein] + ADP + H(+). Activation requires autophosphorylation of Ser-328 and Ser-332. Autophosphorylation and subsequent activation is inhibited by increases in intracellular ionic strength: Cl(-) potently inhibits WNK4 kinase activity via direct binding. Also inhibited by K(+) ions. Functionally, serine/threonine-protein kinase component of the WNK4-SPAK/OSR1 kinase cascade, which acts as a key regulator of ion transport in the distal nephron and blood pressure. The WNK4-SPAK/OSR1 kinase cascade is composed of WNK4, which mediates phosphorylation and activation of downstream kinases OXSR1/OSR1 and STK39/SPAK. Following activation, OXSR1/OSR1 and STK39/SPAK catalyze phosphorylation of ion cotransporters, such as SLC12A1/NKCC2, SLC12A2/NKCC1, SLC12A3/NCC, SLC12A5/KCC2 or SLC12A6/KCC3, regulating their activity. Acts as a molecular switch that regulates the balance between renal salt reabsorption and K(+) secretion by modulating the activities of renal transporters and channels, including the Na-Cl cotransporter SLC12A3/NCC and the K(+) channel, KCNJ1/ROMK. Regulates NaCl reabsorption in the distal nephron by activating the thiazide-sensitive Na-Cl cotransporter SLC12A3/NCC in distal convoluted tubule cells of kidney: activates SLC12A3/NCC in a OXSR1/OSR1- and STK39/SPAK-dependent process. Also acts as a scaffold protein independently of its protein kinase activity: negatively regulates cell membrane localization of various transporters and channels (CFTR, KCNJ1/ROMK, SLC4A4, SLC26A9 and TRPV4) by clathrin-dependent endocytosis. Also inhibits the activity of the epithelial Na(+) channel (ENaC) SCNN1A, SCNN1B, SCNN1D in a inase-independent mechanism. May also phosphorylate NEDD4L. In Rattus norvegicus (Rat), this protein is Serine/threonine-protein kinase WNK4.